Consider the following 111-residue polypeptide: Large ribosomal subunit protein P2 (111 aa).

Residues 62–111 are disordered; that stretch reads LASVPSGGAGGAAAAGGAAAAGGAAEAAPEEAKEEEKEESDDDMGFGLFD. The span at 76–88 shows a compositional bias: low complexity; that stretch reads AGGAAAAGGAAEA. Position 101 is a phosphoserine (Ser-101).

The protein belongs to the eukaryotic ribosomal protein P1/P2 family. P1 and P2 exist as dimers at the large ribosomal subunit.

Its function is as follows. Plays an important role in the elongation step of protein synthesis. The polypeptide is Large ribosomal subunit protein P2 (Podospora anserina (Pleurage anserina)).